A 146-amino-acid chain; its full sequence is Putative pre-16S rRNA nuclease (146 aa).

It belongs to the YqgF nuclease family.

Its subcellular location is the cytoplasm. Could be a nuclease involved in processing of the 5'-end of pre-16S rRNA. This is Putative pre-16S rRNA nuclease from Paraburkholderia xenovorans (strain LB400).